Reading from the N-terminus, the 91-residue chain is Small ribosomal subunit protein uS19 (91 aa).

The protein belongs to the universal ribosomal protein uS19 family.

In terms of biological role, protein S19 forms a complex with S13 that binds strongly to the 16S ribosomal RNA. This Trichodesmium erythraeum (strain IMS101) protein is Small ribosomal subunit protein uS19.